Consider the following 78-residue polypeptide: RNA-binding protein Hfq (78 aa).

Residues 10-69 (DPFLNALRREHVPVSIYLVNGIKLQGQVESFDQYVVLLKNTVTQMVYKHAISTVVPARPV) enclose the Sm domain.

This sequence belongs to the Hfq family. Homohexamer.

RNA chaperone that binds small regulatory RNA (sRNAs) and mRNAs to facilitate mRNA translational regulation in response to envelope stress, environmental stress and changes in metabolite concentrations. Also binds with high specificity to tRNAs. This is RNA-binding protein Hfq from Dechloromonas aromatica (strain RCB).